A 336-amino-acid chain; its full sequence is Holliday junction branch migration complex subunit RuvB (336 aa).

A large ATPase domain (RuvB-L) region spans residues 1-181 (MDRIVEIEKF…FGMQFRLEFY (181 aa)). Residues Leu20, Arg21, Gly62, Lys65, Thr66, Thr67, 128 to 130 (EDF), Arg171, Tyr181, and Arg218 contribute to the ATP site. Residue Thr66 participates in Mg(2+) binding. A small ATPAse domain (RuvB-S) region spans residues 182-252 (KNEELAIILE…RAKEALDSLG (71 aa)). Residues 255-336 (ELGFDAMDLR…KYNKGLFDEK (82 aa)) form a head domain (RuvB-H) region. Residues Arg309 and Arg314 each contribute to the DNA site.

It belongs to the RuvB family. As to quaternary structure, homohexamer. Forms an RuvA(8)-RuvB(12)-Holliday junction (HJ) complex. HJ DNA is sandwiched between 2 RuvA tetramers; dsDNA enters through RuvA and exits via RuvB. An RuvB hexamer assembles on each DNA strand where it exits the tetramer. Each RuvB hexamer is contacted by two RuvA subunits (via domain III) on 2 adjacent RuvB subunits; this complex drives branch migration. In the full resolvosome a probable DNA-RuvA(4)-RuvB(12)-RuvC(2) complex forms which resolves the HJ.

The protein localises to the cytoplasm. It carries out the reaction ATP + H2O = ADP + phosphate + H(+). In terms of biological role, the RuvA-RuvB-RuvC complex processes Holliday junction (HJ) DNA during genetic recombination and DNA repair, while the RuvA-RuvB complex plays an important role in the rescue of blocked DNA replication forks via replication fork reversal (RFR). RuvA specifically binds to HJ cruciform DNA, conferring on it an open structure. The RuvB hexamer acts as an ATP-dependent pump, pulling dsDNA into and through the RuvAB complex. RuvB forms 2 homohexamers on either side of HJ DNA bound by 1 or 2 RuvA tetramers; 4 subunits per hexamer contact DNA at a time. Coordinated motions by a converter formed by DNA-disengaged RuvB subunits stimulates ATP hydrolysis and nucleotide exchange. Immobilization of the converter enables RuvB to convert the ATP-contained energy into a lever motion, pulling 2 nucleotides of DNA out of the RuvA tetramer per ATP hydrolyzed, thus driving DNA branch migration. The RuvB motors rotate together with the DNA substrate, which together with the progressing nucleotide cycle form the mechanistic basis for DNA recombination by continuous HJ branch migration. Branch migration allows RuvC to scan DNA until it finds its consensus sequence, where it cleaves and resolves cruciform DNA. The protein is Holliday junction branch migration complex subunit RuvB of Campylobacter lari (strain RM2100 / D67 / ATCC BAA-1060).